Consider the following 321-residue polypeptide: Taste receptor type 2 member 135 (321 aa).

Residues 1 to 28 (MGPIMSTGETSTAHTVLGCQITDKTVIT) are Extracellular-facing. The chain crosses the membrane as a helical span at residues 29–49 (LFVILVFSCLVAVVGNGFIII). Over 50–75 (ALGMKWLLRRTLSAHNKLLISLAASR) the chain is Cytoplasmic. Residues 76–96 (FCLQCVVIGKNIYVFLNPSSF) form a helical membrane-spanning segment. At 97–106 (PYNPVIQLLN) the chain is on the extracellular side. The chain crosses the membrane as a helical span at residues 107 to 127 (LMWDFLTAATIWFCSLLGFFY). Residues 128–149 (CVKIATLTHPVFVWLKYRLPGW) lie on the Cytoplasmic side of the membrane. A helical membrane pass occupies residues 150 to 170 (VPWMLLSAVGMSSLTSILCFI). Residues 171–207 (GNHMIYQNYARRGHQPWNATGNSLRHSLEKFYFISIK) lie on the Extracellular side of the membrane. N-linked (GlcNAc...) asparagine glycosylation occurs at asparagine 188. The helical transmembrane segment at 208–228 (IIMWTVPTVIFSIFMSLLLVS) threads the bilayer. The Cytoplasmic portion of the chain corresponds to 229–253 (LVRHMKKTLLALSELRDVWAQAHFK). The helical transmembrane segment at 254–274 (ALLPLLSFIILFISCFLTLVL) threads the bilayer. Residues 275-286 (SSASSTPYQEFR) lie on the Extracellular side of the membrane. Residues 287 to 307 (YWMWQVVIHLCTVIHPIVILL) form a helical membrane-spanning segment. Over 308–321 (SNPVLRVVMKRGCC) the chain is Cytoplasmic.

It belongs to the G-protein coupled receptor T2R family.

The protein localises to the membrane. Putative taste receptor which may play a role in the perception of bitterness. The chain is Taste receptor type 2 member 135 from Rattus norvegicus (Rat).